The following is a 357-amino-acid chain: 3-isopropylmalate dehydrogenase (357 aa).

Glycine 76 to glutamate 89 provides a ligand contact to NAD(+). Residues arginine 96, arginine 106, arginine 134, and aspartate 224 each contribute to the substrate site. Mg(2+) is bound by residues aspartate 224, aspartate 248, and aspartate 252. Residue glycine 282 to asparagine 294 participates in NAD(+) binding.

Belongs to the isocitrate and isopropylmalate dehydrogenases family. LeuB type 1 subfamily. As to quaternary structure, homodimer. It depends on Mg(2+) as a cofactor. Mn(2+) is required as a cofactor.

Its subcellular location is the cytoplasm. The enzyme catalyses (2R,3S)-3-isopropylmalate + NAD(+) = 4-methyl-2-oxopentanoate + CO2 + NADH. The protein operates within amino-acid biosynthesis; L-leucine biosynthesis; L-leucine from 3-methyl-2-oxobutanoate: step 3/4. Its function is as follows. Catalyzes the oxidation of 3-carboxy-2-hydroxy-4-methylpentanoate (3-isopropylmalate) to 3-carboxy-4-methyl-2-oxopentanoate. The product decarboxylates to 4-methyl-2 oxopentanoate. The sequence is that of 3-isopropylmalate dehydrogenase from Saccharophagus degradans (strain 2-40 / ATCC 43961 / DSM 17024).